Consider the following 207-residue polypeptide: Large ribosomal subunit protein bL25 (207 aa).

It belongs to the bacterial ribosomal protein bL25 family. CTC subfamily. In terms of assembly, part of the 50S ribosomal subunit; part of the 5S rRNA/L5/L18/L25 subcomplex. Contacts the 5S rRNA. Binds to the 5S rRNA independently of L5 and L18.

Functionally, this is one of the proteins that binds to the 5S RNA in the ribosome where it forms part of the central protuberance. This Brucella canis (strain ATCC 23365 / NCTC 10854 / RM-666) protein is Large ribosomal subunit protein bL25.